Here is a 329-residue protein sequence, read N- to C-terminus: Ubiquitin carboxyl-terminal hydrolase isozyme L5 (329 aa).

One can recognise a UCH catalytic domain in the interval glutamate 7–serine 225. Residue lysine 47 is modified to N6-succinyllysine. Catalysis depends on cysteine 88, which acts as the Nucleophile. An N6-acetyllysine modification is found at lysine 158. Residue histidine 164 is the Proton donor of the active site. Lysine 289 bears the N6-succinyllysine mark. The 29-residue stretch at asparagine 291–lysine 319 folds into the ULD domain. Residues valine 313–lysine 329 form an interaction with ADRM1 region.

It belongs to the peptidase C12 family. As to quaternary structure, component of the 19S (PA700) regulatory complex of the 26S proteasome. Interacts with ADRM1 and NFRKB. Component of the INO80 complex; specifically part of a complex module associated with N-terminus of INO80.

Its subcellular location is the cytoplasm. The protein resides in the nucleus. The enzyme catalyses Thiol-dependent hydrolysis of ester, thioester, amide, peptide and isopeptide bonds formed by the C-terminal Gly of ubiquitin (a 76-residue protein attached to proteins as an intracellular targeting signal).. Its activity is regulated as follows. Activated by ADRM1. Inhibited by interaction with NFRKB. Functionally, protease that specifically cleaves 'Lys-48'-linked polyubiquitin chains. Deubiquitinating enzyme associated with the 19S regulatory subunit of the 26S proteasome. Putative regulatory component of the INO80 complex; however is inactive in the INO80 complex and is activated by a transient interaction of the INO80 complex with the proteasome via ADRM1. The sequence is that of Ubiquitin carboxyl-terminal hydrolase isozyme L5 (UCHL5) from Sus scrofa (Pig).